The chain runs to 261 residues: Glucosamine-6-phosphate deaminase (261 aa).

Asp67 serves as the catalytic Proton acceptor; for enolization step. Catalysis depends on Asn136, which acts as the For ring-opening step. His138 acts as the Proton acceptor; for ring-opening step in catalysis. Catalysis depends on Glu143, which acts as the For ring-opening step.

It belongs to the glucosamine/galactosamine-6-phosphate isomerase family. NagB subfamily.

The catalysed reaction is alpha-D-glucosamine 6-phosphate + H2O = beta-D-fructose 6-phosphate + NH4(+). It functions in the pathway amino-sugar metabolism; N-acetylneuraminate degradation; D-fructose 6-phosphate from N-acetylneuraminate: step 5/5. Catalyzes the reversible isomerization-deamination of glucosamine 6-phosphate (GlcN6P) to form fructose 6-phosphate (Fru6P) and ammonium ion. In Cutibacterium acnes (strain DSM 16379 / KPA171202) (Propionibacterium acnes), this protein is Glucosamine-6-phosphate deaminase.